We begin with the raw amino-acid sequence, 160 residues long: S-ribosylhomocysteine lyase (160 aa).

3 residues coordinate Fe cation: histidine 57, histidine 61, and cysteine 127.

Belongs to the LuxS family. In terms of assembly, homodimer. The cofactor is Fe cation.

It catalyses the reaction S-(5-deoxy-D-ribos-5-yl)-L-homocysteine = (S)-4,5-dihydroxypentane-2,3-dione + L-homocysteine. In terms of biological role, involved in the synthesis of autoinducer 2 (AI-2) which is secreted by bacteria and is used to communicate both the cell density and the metabolic potential of the environment. The regulation of gene expression in response to changes in cell density is called quorum sensing. Catalyzes the transformation of S-ribosylhomocysteine (RHC) to homocysteine (HC) and 4,5-dihydroxy-2,3-pentadione (DPD). The chain is S-ribosylhomocysteine lyase from Streptococcus pyogenes serotype M2 (strain MGAS10270).